A 117-amino-acid polypeptide reads, in one-letter code: Ig heavy chain V region 1-72 (117 aa).

An N-terminal signal peptide occupies residues 1-19; the sequence is MGWSCIMLFLAATATGVHS. Positions 20–49 are framework-1; sequence QVQLQQPGAELVKPGASVKLSCKASGYTFT. Cysteine 41 and cysteine 115 are oxidised to a cystine. Residues 50-54 form a complementarity-determining-1 region; that stretch reads SYWMH. A framework-2 region spans residues 55–68; sequence WVKQRPGRGLEWIG. Residues 69–85 are complementarity-determining-2; sequence RIDPNSGGTKYNEKFKS. The tract at residues 86-117 is framework-3; the sequence is KATLTVDKPSSTAYMQLSSLTSEDSAVYYCAR.

The chain is Ig heavy chain V region 1-72 from Mus musculus (Mouse).